Consider the following 146-residue polypeptide: Keratin-associated protein 4-1 (146 aa).

18 tandem repeats follow at residues 5-9 (CCGSV), 24-28 (CCRPS), 29-33 (CCQTT), 34-38 (CCCPS), 44-48 (CCRPS), 54-58 (CCQTT), 59-63 (CCRPS), 64-68 (CCHPV), 69-73 (CCQTT), 83-87 (CCRPL), 88-92 (CCQTT), 102-106 (CCRPL), 107-111 (CCQTT), 121-125 (CCRPL), 126-130 (CCQTT), 131-135 (CCRAT), 136-140 (CCRPS), and 141-145 (CCGSS). The segment at 5–145 (CCGSVCSDQG…CCRPSCCGSS (141 aa)) is 18 X 5 AA repeats of C-C-[GRQC]-[SPT]-[VSTL].

Belongs to the KRTAP type 4 family. Interacts with hair keratins. As to expression, expressed in the hair follicles.

In the hair cortex, hair keratin intermediate filaments are embedded in an interfilamentous matrix, consisting of hair keratin-associated proteins (KRTAP), which are essential for the formation of a rigid and resistant hair shaft through their extensive disulfide bond cross-linking with abundant cysteine residues of hair keratins. The matrix proteins include the high-sulfur and high-glycine-tyrosine keratins. The protein is Keratin-associated protein 4-1 (KRTAP4-1) of Homo sapiens (Human).